The following is a 283-amino-acid chain: NADPH-dependent 7-cyano-7-deazaguanine reductase (283 aa).

Residue 90-92 coordinates substrate; it reads IES. An NADPH-binding site is contributed by 92-93; the sequence is SK. The active-site Thioimide intermediate is cysteine 190. Aspartate 197 acts as the Proton donor in catalysis. 229-230 lines the substrate pocket; sequence HE. 258–259 serves as a coordination point for NADPH; sequence RG.

Belongs to the GTP cyclohydrolase I family. QueF type 2 subfamily. In terms of assembly, homodimer.

It localises to the cytoplasm. It carries out the reaction 7-aminomethyl-7-carbaguanine + 2 NADP(+) = 7-cyano-7-deazaguanine + 2 NADPH + 3 H(+). The protein operates within tRNA modification; tRNA-queuosine biosynthesis. Its function is as follows. Catalyzes the NADPH-dependent reduction of 7-cyano-7-deazaguanine (preQ0) to 7-aminomethyl-7-deazaguanine (preQ1). This Dechloromonas aromatica (strain RCB) protein is NADPH-dependent 7-cyano-7-deazaguanine reductase.